The sequence spans 1174 residues: Ankyrin repeat and LEM domain-containing protein 2 homolog (1174 aa).

4 stretches are compositionally biased toward low complexity: residues 37–56, 150–164, 174–198, and 205–219; these read NPAS…SAAS, SSPT…SSPT, LGSN…SSSN, and QQQM…PQQP. 2 disordered regions span residues 37–74 and 141–230; these read NPAS…YEDP and PIIS…PFRA. An ANK repeat occupies 338–367; it reads RGETPLHFAAKNGHVAMVEVLVSYPECKSL. Disordered regions lie at residues 519 to 543 and 961 to 981; these read AEAT…HNNN and GSSS…SPGI. Positions 521–532 are enriched in polar residues; it reads ATSSPKPTKNVP. Low complexity predominate over residues 533-543; it reads NGTNECEHNNN.

This sequence belongs to the ANKLE2 family.

Its subcellular location is the endoplasmic reticulum. The protein resides in the nucleus envelope. It is found in the cytoplasm. Its function is as follows. Involved in brain development probably by regulating asymmetric division of neuroblasts. Regulates neuroblast asymmetric cell division by controlling asymmetric protein localization of Mira, Baz, Par-6 and aPKC, and spindle alignment. Also, regulates the localization of kinase Ball during mitosis, specifically maintaining Ball in the nucleus during interphase. Required for proper ER and nuclear envelope morphology in neuroblasts. The chain is Ankyrin repeat and LEM domain-containing protein 2 homolog from Drosophila melanogaster (Fruit fly).